We begin with the raw amino-acid sequence, 1058 residues long: Carbamoyl phosphate synthase large chain (1058 aa).

The interval 1–401 is carboxyphosphate synthetic domain; the sequence is MPKRTDIQKI…SLLKACRSLE (401 aa). Positions 129, 169, 175, 176, 208, 210, 215, 241, 242, 243, 284, and 298 each coordinate ATP. One can recognise an ATP-grasp 1 domain in the interval 133-327; the sequence is KQLMEELEQP…IAKLAAKIAV (195 aa). Positions 284, 298, and 300 each coordinate Mg(2+). The Mn(2+) site is built by glutamine 284, glutamate 298, and asparagine 300. The interval 402–546 is oligomerization domain; it reads IGVHHNEIPE…YSTYGWENES (145 aa). The tract at residues 547–929 is carbamoyl phosphate synthetic domain; sequence IRSDKESVLV…ALYKAFEASY (383 aa). Residues 671–861 form the ATP-grasp 2 domain; that stretch reads EQALKELDIP…MAQVATKLIL (191 aa). Arginine 707, serine 746, isoleucine 748, glutamate 752, glycine 777, valine 778, histidine 779, serine 780, glutamine 820, and glutamate 832 together coordinate ATP. The Mg(2+) site is built by glutamine 820, glutamate 832, and asparagine 834. 3 residues coordinate Mn(2+): glutamine 820, glutamate 832, and asparagine 834. The MGS-like domain maps to 930–1058; the sequence is LHLPTFGNVV…ESRSFVTEAI (129 aa). The interval 930–1058 is allosteric domain; the sequence is LHLPTFGNVV…ESRSFVTEAI (129 aa).

Belongs to the CarB family. Composed of two chains; the small (or glutamine) chain promotes the hydrolysis of glutamine to ammonia, which is used by the large (or ammonia) chain to synthesize carbamoyl phosphate. Tetramer of heterodimers (alpha,beta)4. Mg(2+) is required as a cofactor. It depends on Mn(2+) as a cofactor.

The enzyme catalyses hydrogencarbonate + L-glutamine + 2 ATP + H2O = carbamoyl phosphate + L-glutamate + 2 ADP + phosphate + 2 H(+). It carries out the reaction hydrogencarbonate + NH4(+) + 2 ATP = carbamoyl phosphate + 2 ADP + phosphate + 2 H(+). It functions in the pathway amino-acid biosynthesis; L-arginine biosynthesis; carbamoyl phosphate from bicarbonate: step 1/1. It participates in pyrimidine metabolism; UMP biosynthesis via de novo pathway; (S)-dihydroorotate from bicarbonate: step 1/3. In terms of biological role, large subunit of the glutamine-dependent carbamoyl phosphate synthetase (CPSase). CPSase catalyzes the formation of carbamoyl phosphate from the ammonia moiety of glutamine, carbonate, and phosphate donated by ATP, constituting the first step of 2 biosynthetic pathways, one leading to arginine and/or urea and the other to pyrimidine nucleotides. The large subunit (synthetase) binds the substrates ammonia (free or transferred from glutamine from the small subunit), hydrogencarbonate and ATP and carries out an ATP-coupled ligase reaction, activating hydrogencarbonate by forming carboxy phosphate which reacts with ammonia to form carbamoyl phosphate. In Streptococcus pneumoniae (strain Hungary19A-6), this protein is Carbamoyl phosphate synthase large chain.